The chain runs to 202 residues: Putative 3-methyladenine DNA glycosylase (202 aa).

It belongs to the DNA glycosylase MPG family.

The sequence is that of Putative 3-methyladenine DNA glycosylase from Clostridium botulinum (strain Alaska E43 / Type E3).